Reading from the N-terminus, the 194-residue chain is Peptidyl-tRNA hydrolase (194 aa).

Tyr17 provides a ligand contact to tRNA. Residue His22 is the Proton acceptor of the active site. Phe68, Asn70, and Asn116 together coordinate tRNA.

This sequence belongs to the PTH family. As to quaternary structure, monomer.

It is found in the cytoplasm. The catalysed reaction is an N-acyl-L-alpha-aminoacyl-tRNA + H2O = an N-acyl-L-amino acid + a tRNA + H(+). In terms of biological role, hydrolyzes ribosome-free peptidyl-tRNAs (with 1 or more amino acids incorporated), which drop off the ribosome during protein synthesis, or as a result of ribosome stalling. Catalyzes the release of premature peptidyl moieties from peptidyl-tRNA molecules trapped in stalled 50S ribosomal subunits, and thus maintains levels of free tRNAs and 50S ribosomes. The sequence is that of Peptidyl-tRNA hydrolase from Glaesserella parasuis serovar 5 (strain SH0165) (Haemophilus parasuis).